Consider the following 228-residue polypeptide: N-(5'-phosphoribosyl)anthranilate isomerase (228 aa).

It belongs to the TrpF family.

The catalysed reaction is N-(5-phospho-beta-D-ribosyl)anthranilate = 1-(2-carboxyphenylamino)-1-deoxy-D-ribulose 5-phosphate. Its pathway is amino-acid biosynthesis; L-tryptophan biosynthesis; L-tryptophan from chorismate: step 3/5. This chain is N-(5'-phosphoribosyl)anthranilate isomerase, found in Azorhizobium caulinodans (strain ATCC 43989 / DSM 5975 / JCM 20966 / LMG 6465 / NBRC 14845 / NCIMB 13405 / ORS 571).